We begin with the raw amino-acid sequence, 540 residues long: Keratin, type II cytoskeletal 73 (540 aa).

The segment at 1 to 131 is head; that stretch reads MSRQFTYKSG…DPEIQKVCAQ (131 aa). Residues 132–167 are coil 1A; that stretch reads EREQIKALNNKFASFIDKVRFLEQQNQVLGTKWELL. The IF rod domain maps to 132 to 445; it reads EREQIKALNN…KLLEGEECRM (314 aa). Residues 168-186 form a linker 1 region; that stretch reads QQQDLDNCKNNLEPILEGY. Positions 187 to 278 are coil 1B; the sequence is ISNLRKQLEM…CLYEGEIAQM (92 aa). The segment at 279-302 is linker 12; the sequence is QSHISDTSVILSMDNNRNLDLNSI. Residues 303–441 form a coil 2 region; the sequence is IAEVRAQYED…ATYRKLLEGE (139 aa). Residues 442-540 form a tail region; sequence ECRMSGEYTN…LSSPTKKTPR (99 aa). The disordered stretch occupies residues 509–540; that stretch reads GEAKTRLGSTSEIKDLLGKTPALSSPTKKTPR. Over residues 530-540 the composition is skewed to polar residues; the sequence is ALSSPTKKTPR.

Belongs to the intermediate filament family. Heterotetramer of two type I and two type II keratins.

In terms of biological role, has a role in hair formation. Specific component of keratin intermediate filaments in the inner root sheath (IRS) of the hair follicle. The polypeptide is Keratin, type II cytoskeletal 73 (KRT73) (Bos taurus (Bovine)).